Consider the following 395-residue polypeptide: Endophilin-B2 (395 aa).

An N-acetylmethionine modification is found at Met1. A membrane-binding amphipathic helix region spans residues 1–27; the sequence is MDFNMKKLASDAGIFFTRAVQFTEEKF. At Ser10 the chain carries Phosphoserine. The BAR domain occupies 24–287; sequence EEKFGQAEKT…LGRFPGTFVG (264 aa). Coiled-coil stretches lie at residues 116–132 and 206–240; these read IKVA…ERDF and ASAL…LLLE. The region spanning 335–395 is the SH3 domain; sequence SGTRKARVLY…VPVTYLELLS (61 aa). Position 395 is a phosphoserine (Ser395).

This sequence belongs to the endophilin family. In terms of assembly, homodimer, and heterodimer with SH3GLB1.

It localises to the cytoplasm. This Bos taurus (Bovine) protein is Endophilin-B2 (SH3GLB2).